The sequence spans 332 residues: Procathepsin L (332 aa).

An N-terminal signal peptide occupies residues 1-17 (MHPLLFLAGLCLGVASA). Positions 18 to 112 (APQLYQSLDA…KVFQAPFFVE (95 aa)) are cleaved as a propeptide — activation peptide. Zn(2+) is bound at residue Glu-121. The active site involves Cys-137. Glu-162, Asp-183, Glu-198, and Asp-208 together coordinate Zn(2+). Cys-168 and Cys-210 are oxidised to a cystine. Asn-220 is a glycosylation site (N-linked (GlcNAc...) asparagine). 4 residues coordinate Zn(2+): Asp-226, Asp-249, Asp-272, and Asp-274. Cys-268 and Cys-321 are oxidised to a cystine. Residue His-275 is part of the active site. Residues 288–290 (ETE) constitute a propeptide that is removed on maturation. Asn-299 is a catalytic residue.

It belongs to the peptidase C1 family. Dimer of a heavy and a light chain linked by disulfide bonds. Interacts with Long isoform of CD74/Ii chain; the interaction stabilizes the conformation of mature CTSL. In terms of processing, during export along the endocytic pathway, pro-CTSL undergoes several proteolytic cleavages to generate the CTSL single-chain and two-chain mature forms, composed of a heavy chain linked to a light chain by disulfide bonds. Autocleavage; produces the single-chain CTSL after cleavage of the propeptide. The cleavage can be intermolecular. In terms of tissue distribution, expressed in the endometrium.

It is found in the lysosome. Its subcellular location is the apical cell membrane. The protein localises to the cytoplasmic vesicle. The protein resides in the secretory vesicle. It localises to the chromaffin granule. It is found in the secreted. Its subcellular location is the extracellular space. It carries out the reaction Specificity close to that of papain. As compared to cathepsin B, cathepsin L exhibits higher activity toward protein substrates, but has little activity on Z-Arg-Arg-NHMec, and no peptidyl-dipeptidase activity.. With respect to regulation, inhibited by the propeptide produced by autocleavage. Long isoform of CD74/Ii chain stabilizes the conformation of mature CTSL by binding to its active site and serving as a chaperone to help maintain a pool of mature enzyme in endocytic compartments and extracellular space of APCs. IFNG enhances the conversion into the CTSL mature and active form. Inhibited by CST6. Inhibited by the glycopeptide antibiotic teicoplanin. Inhibited by amantadine. In terms of biological role, thiol protease important for the overall degradation of proteins in lysosomes. Plays a critical for normal cellular functions such as general protein turnover, antigen processing and bone remodeling. Involved in the solubilization of cross-linked TG/thyroglobulin and in the subsequent release of thyroid hormone thyroxine (T4) by limited proteolysis of TG/thyroglobulin in the thyroid follicle lumen. In neuroendocrine chromaffin cells secretory vesicles, catalyzes the prohormone proenkephalin processing to the active enkephalin peptide neurotransmitter. In thymus, regulates CD4(+) T cell positive selection by generating the major histocompatibility complex class II (MHCII) bound peptide ligands presented by cortical thymic epithelial cells. Also mediates invariant chain processing in cortical thymic epithelial cells. Major elastin-degrading enzyme at neutral pH. Accumulates as a mature and active enzyme in the extracellular space of antigen presenting cells (APCs) to regulate degradation of the extracellular matrix in the course of inflammation. Secreted form generates endostatin from COL18A1. Critical for cardiac morphology and function. Plays an important role in hair follicle morphogenesis and cycling, as well as epidermal differentiation. Required for maximal stimulation of steroidogenesis by TIMP1. This Felis catus (Cat) protein is Procathepsin L (CTSL).